The sequence spans 306 residues: MSAFPPPPIPAPDASRVARVEPTPDVVRGILELGDRARADDGVAPFNEQTRLLLGTEDGPALLVVQGTDGRPIGAAVAARGDGGIEAEIVVDPARRRRGVGRALLDAVLAEAAGSPVSVWAHGDHPGARALAAATGLDRARELLQLRASVAEARTGLGERPMPAGLALSSFTADDADDWVALNARAFASHPEQGRMTRGDLDDRVAEPWFDPALLLLARDADGRLAGFHWLKVEGGQAEVYVLGVDPDRAARGLGSALLAAGLDLLAARGLDEVDLYVEADNAPALALYRRAAFRDAAVDVQYRRA.

N-acetyltransferase domains are found at residues 17-163 (VARV…RPMP) and 166-306 (LALS…YRRA). Residue E48 coordinates 1D-myo-inositol 2-(L-cysteinylamino)-2-deoxy-alpha-D-glucopyranoside. Residue 89-91 (IVV) participates in acetyl-CoA binding. 3 residues coordinate 1D-myo-inositol 2-(L-cysteinylamino)-2-deoxy-alpha-D-glucopyranoside: E192, K232, and E239. Acetyl-CoA-binding positions include 243 to 245 (LGV) and 250 to 256 (AARGLGS). Position 277 (Y277) interacts with 1D-myo-inositol 2-(L-cysteinylamino)-2-deoxy-alpha-D-glucopyranoside.

Belongs to the acetyltransferase family. MshD subfamily. Monomer.

It catalyses the reaction 1D-myo-inositol 2-(L-cysteinylamino)-2-deoxy-alpha-D-glucopyranoside + acetyl-CoA = mycothiol + CoA + H(+). Catalyzes the transfer of acetyl from acetyl-CoA to desacetylmycothiol (Cys-GlcN-Ins) to form mycothiol. The chain is Mycothiol acetyltransferase from Clavibacter michiganensis subsp. michiganensis (strain NCPPB 382).